A 235-amino-acid polypeptide reads, in one-letter code: Nucleoprotein (235 aa).

RNA is bound by residues Phe-17, Asp-18, Ala-47, Lys-50, Asn-75, His-76, Arg-81, Arg-94, Ile-124, Pro-126, Glu-129, Arg-167, Tyr-177, Lys-179, Lys-180, Arg-183, Gln-184, and Arg-185.

It belongs to the orthobunyavirus nucleocapsid protein family. Homotetramer. Binds the viral genomic RNA. Interacts with host PABP1.

The protein localises to the virion. Its function is as follows. Encapsidates the genome protecting it from nucleases. The encapsidated genomic RNA is termed the nucleocapsid (NC) and serves as template for transcription and replication. The NC have a helical organization. Seems to participate in the nuclear relocalization of host PABP1, thereby inhibiting host cellular translation. The sequence is that of Nucleoprotein (N) from Cervidae (Deer).